The chain runs to 186 residues: Ribosome-recycling factor (186 aa).

Residues 144-163 (EKDGVIGQDESRAQSERVQK) form a disordered region.

It belongs to the RRF family.

It localises to the cytoplasm. Functionally, responsible for the release of ribosomes from messenger RNA at the termination of protein biosynthesis. May increase the efficiency of translation by recycling ribosomes from one round of translation to another. The sequence is that of Ribosome-recycling factor from Rhizobium etli (strain CIAT 652).